A 966-amino-acid chain; its full sequence is MSDDKRAKSDKNEKNKYPVNLLDTPFPMRGDLPKREPQWVKQWQDKQLYKKIRAARKGAKKFVLHDGPPYANGDIHIGHAVNKVLKDMIIKARGLTGLDAVYVPGWDCHGMPIEIQIEKKFGKGLPVQEVQAKARAYATEQIKRQMVDFERLGVLGDWDHPYLTMNYRNEADELRALGKIMEKGYVFRGLKPVNWCFDCGSALAEAEVEYKDKVDLSIDVGFPFAEADKLAHAFKVPVEQIDARPGWIVIWTTTPWTIPSNQALNVHPEVEYALVDTPRGHLILATERVEEQLKVYALEGKVIATATGAALSEIRFHHPLAKMDGGYDRLSPIYLGDYVTTDTGSGIVHSAPAYGVEDFQSCKAHGMPDSDIISPVMGNGVYAGTLPLFGGLSIWDANPRIVEALQESGNLFNSHKYTHSYMHCWRHKTPIIYRATSQWFAGMDVDPAEENGKPVPTLRETALAGIDATEFYPAWGKQRLHNMIANRPDWTLSRQRQWGVPMAFFVHKETGALHPRTPELLEAIAKRVEQQGIEAWQTLDPAELLGDEASQYEKNRDTLDVWFDSGTTHWTVIRGSHRDDLYDPSADEADGRLADLYLEGSDQHRGWFHSSLLTASMLYGKPPYKALLTHGFTVDGEGRKMSKSIGNTVSPQDIANKMGAEIIRLWVASTDYSGELSISDEILKRVVESYRRIRNTLRFLLSNLSDYDHGKHALPAAEWLEIDRYAVALTAQLQKEVLSHYEAYEFHPVVAKLQTFCSEDLGGFYLDVLKDRLYTTAPDSKARRAAQNALYHITQAMLHWMAPFLSFTAEEAWQVFAHGTAHTDTIFTSTYYAVPEVDDADDLLQKWHTLREVRAEVTRQLEAVRVEGEIGSSLQAELTIQAGGPVLEALQSLGDDLRFVLLTSAAKVTAAPEAGDLLVTVTPSAHAKCERCWHYRADVGHNPDHPTLCGRCDSNLFGAGEHRSHA.

The segment covering 1-16 (MSDDKRAKSDKNEKNK) has biased composition (basic and acidic residues). Residues 1–24 (MSDDKRAKSDKNEKNKYPVNLLDT) are disordered. Positions 69–79 (PYANGDIHIGH) match the 'HIGH' region motif. Glutamate 599 contributes to the L-isoleucyl-5'-AMP binding site. The short motif at 640-644 (KMSKS) is the 'KMSKS' region element. Position 643 (lysine 643) interacts with ATP. Zn(2+) is bound by residues cysteine 929, cysteine 932, cysteine 949, and cysteine 952.

It belongs to the class-I aminoacyl-tRNA synthetase family. IleS type 1 subfamily. In terms of assembly, monomer. Zn(2+) serves as cofactor.

The protein resides in the cytoplasm. It carries out the reaction tRNA(Ile) + L-isoleucine + ATP = L-isoleucyl-tRNA(Ile) + AMP + diphosphate. Catalyzes the attachment of isoleucine to tRNA(Ile). As IleRS can inadvertently accommodate and process structurally similar amino acids such as valine, to avoid such errors it has two additional distinct tRNA(Ile)-dependent editing activities. One activity is designated as 'pretransfer' editing and involves the hydrolysis of activated Val-AMP. The other activity is designated 'posttransfer' editing and involves deacylation of mischarged Val-tRNA(Ile). The sequence is that of Isoleucine--tRNA ligase from Cupriavidus taiwanensis (strain DSM 17343 / BCRC 17206 / CCUG 44338 / CIP 107171 / LMG 19424 / R1) (Ralstonia taiwanensis (strain LMG 19424)).